The following is a 599-amino-acid chain: MSLLKIYWRAMQYLAVERTATITMCVASVLVALVTLAEPVLFGRVIQSISDKGDIFSPLLMWAALGGFNIMAAVFVARGADRLAHRRRLGVMIDSYERLITMPLAWHQKRGTSNALHTLIRATDSLFTLWLEFMRQHLTTVVALATLIPVAMTMDMRMSLVLIVLGVIYVMIGQLVMRKTKDGQAAVEKHHHKLFEHVSDTISNVSVVQSYNRIASETQALRDYAKNLENAQFPVLNWWALASGLNRMASTFSMVVVLVLGAYFVTKGQMRVGDVIAFIGFAQLMIGRLDQISAFINQTVTARAKLEEFFQMEDATADRQEPENVADLNDVKGDIVFDNVTFEFPNSGQGIYDVSFEVKPGQTVAIVGPTGAGKTTLINLLQRVFDPAAGRIMIDGTDTRTVSRRSLRHAIATVFQDAGLFNRSVEDNIRVGRANATHEEVHAAAKAAAAHDFILAKSEGYDTFVGERGSQLSGGERQRLAIARAILKDSPILVLDEATSALDVETEEKVKQAVDELSHNRTTFIIAHRLSTVRSADLVLFMDKGHLVESGSFNELAERGGRFSDLLRAGGLKLEDKQPKQPVVEGSNVMPFPVKGAVA.

The ABC transmembrane type-1 domain occupies 21–301; the sequence is TITMCVASVL…ISAFINQTVT (281 aa). Helical transmembrane passes span 22–42, 55–75, 156–176, 248–268, and 276–296; these read ITMC…PVLF, IFSP…AAVF, MRMS…GQLV, MAST…VTKG, and IAFI…SAFI. In terms of domain architecture, ABC transporter spans 335 to 569; that stretch reads IVFDNVTFEF…GGRFSDLLRA (235 aa). ATP is bound at residue 368–375; that stretch reads GPTGAGKT.

It belongs to the ABC transporter superfamily. Beta-(1--&gt;2)glucan exporter (TC 3.A.1.108.1) family. As to quaternary structure, homodimer.

The protein resides in the cell inner membrane. The enzyme catalyses [(1-&gt;2)-beta-D-glucosyl](n)(in) + ATP + H2O = [(1-&gt;2)-beta-D-glucosyl](n)(out) + ADP + phosphate + H(+). Its function is as follows. Involved in beta-(1--&gt;2)glucan export. Transmembrane domains (TMD) form a pore in the inner membrane and the ATP-binding domain (NBD) is responsible for energy generation. In Brucella suis biovar 1 (strain 1330), this protein is Beta-(1--&gt;2)glucan export ATP-binding/permease protein NdvA.